Here is a 146-residue protein sequence, read N- to C-terminus: Protein US8.5 (146 aa).

Residues 63-93 (LIAIADARGDPPETLPPGAGGAAPACRRPPR) form a disordered region. The segment covering 84 to 93 (AAPACRRPPR) has biased composition (low complexity).

Belongs to the HHV-1 US8.5 protein family. In terms of processing, phosphorylated.

It is found in the host nucleus. It localises to the host nucleolus. This chain is Protein US8.5, found in Human herpesvirus 2 (strain HG52) (HHV-2).